The chain runs to 455 residues: Bifunctional protein GlmU (455 aa).

The interval 1–232 (MASTTGALIL…DPNLLGVNNP (232 aa)) is pyrophosphorylase. UDP-N-acetyl-alpha-D-glucosamine-binding positions include 10–13 (LAAG), lysine 24, glutamine 75, and 80–81 (GT). Aspartate 106 contributes to the Mg(2+) binding site. Positions 141, 155, 172, and 230 each coordinate UDP-N-acetyl-alpha-D-glucosamine. Mg(2+) is bound at residue asparagine 230. The linker stretch occupies residues 233-253 (AELIRSEALLRTRLVIGHIEG). Residues 254 to 455 (GVLIHAPETV…QTNLPRKPKA (202 aa)) are N-acetyltransferase. Positions 336 and 354 each coordinate UDP-N-acetyl-alpha-D-glucosamine. Histidine 366 functions as the Proton acceptor in the catalytic mechanism. Residues tyrosine 369 and asparagine 380 each coordinate UDP-N-acetyl-alpha-D-glucosamine. Acetyl-CoA is bound by residues alanine 383, 389–390 (NY), serine 408, alanine 426, and arginine 443.

This sequence in the N-terminal section; belongs to the N-acetylglucosamine-1-phosphate uridyltransferase family. The protein in the C-terminal section; belongs to the transferase hexapeptide repeat family. In terms of assembly, homotrimer. Mg(2+) is required as a cofactor.

The protein localises to the cytoplasm. The enzyme catalyses alpha-D-glucosamine 1-phosphate + acetyl-CoA = N-acetyl-alpha-D-glucosamine 1-phosphate + CoA + H(+). It carries out the reaction N-acetyl-alpha-D-glucosamine 1-phosphate + UTP + H(+) = UDP-N-acetyl-alpha-D-glucosamine + diphosphate. It functions in the pathway nucleotide-sugar biosynthesis; UDP-N-acetyl-alpha-D-glucosamine biosynthesis; N-acetyl-alpha-D-glucosamine 1-phosphate from alpha-D-glucosamine 6-phosphate (route II): step 2/2. The protein operates within nucleotide-sugar biosynthesis; UDP-N-acetyl-alpha-D-glucosamine biosynthesis; UDP-N-acetyl-alpha-D-glucosamine from N-acetyl-alpha-D-glucosamine 1-phosphate: step 1/1. It participates in bacterial outer membrane biogenesis; LPS lipid A biosynthesis. Catalyzes the last two sequential reactions in the de novo biosynthetic pathway for UDP-N-acetylglucosamine (UDP-GlcNAc). The C-terminal domain catalyzes the transfer of acetyl group from acetyl coenzyme A to glucosamine-1-phosphate (GlcN-1-P) to produce N-acetylglucosamine-1-phosphate (GlcNAc-1-P), which is converted into UDP-GlcNAc by the transfer of uridine 5-monophosphate (from uridine 5-triphosphate), a reaction catalyzed by the N-terminal domain. This Nitratidesulfovibrio vulgaris (strain DP4) (Desulfovibrio vulgaris) protein is Bifunctional protein GlmU.